A 579-amino-acid chain; its full sequence is Mitochondrial distribution and morphology protein 31 (579 aa).

The transit peptide at 1–47 directs the protein to the mitochondrion; sequence MSLFTRPFLRSPRQFSVARYVYWARSPALRSNLRIPSIAAASLRAYS. Residues 48–114 lie on the Mitochondrial matrix side of the membrane; the sequence is NESKTGRDAP…SDDISAFISW (67 aa). A helical membrane pass occupies residues 115 to 135; that stretch reads ILVSNIFIFIFWTTTFVSLIL. The Mitochondrial intermembrane portion of the chain corresponds to 136-558; sequence YLINTVFAQE…DEKRTLRLRR (423 aa). Residues 559 to 578 traverse the membrane as a helical segment; the sequence is VGFWSLQLILQVILMSLGAI. Position 579 (alanine 579) is a topological domain, mitochondrial matrix.

It belongs to the MDM31/MDM32 family. As to quaternary structure, interacts with MDM32. Participates in a complex of about 600 kDa.

The protein resides in the mitochondrion inner membrane. Functionally, involved in the organization of the mitochondrial membranes and the global structure of the mitochondria. Also required for mitochondrial distribution and mobility as well as for the maintenance of mitochondrial DNA nucleoids structures. The polypeptide is Mitochondrial distribution and morphology protein 31 (MDM31) (Saccharomyces cerevisiae (strain ATCC 204508 / S288c) (Baker's yeast)).